Here is a 468-residue protein sequence, read N- to C-terminus: 55 kDa erythrocyte membrane protein (468 aa).

The PDZ domain occupies 73 to 154; the sequence is LVQFEKVTEE…MVSIKVIPNQ (82 aa). Residues 160–230 enclose the SH3 domain; sequence ALQMFMRAQF…PSPELQEWRV (71 aa). In terms of domain architecture, Guanylate kinase-like spans 284 to 453; the sequence is RKTLVLIGAS…SLKLLEEAFE (170 aa).

The protein belongs to the MAGUK family.

It localises to the membrane. The protein resides in the cell projection. Its subcellular location is the stereocilium. Functionally, may play a role in the regulation of neutrophil polarization. This Gallus gallus (Chicken) protein is 55 kDa erythrocyte membrane protein (MPP1).